The sequence spans 264 residues: NAD-capped RNA hydrolase NudC (264 aa).

Position 70 (Arg-70) interacts with substrate. Positions 99 and 102 each coordinate Zn(2+). Glu-112 contacts substrate. Residues Cys-117 and Cys-122 each contribute to the Zn(2+) site. Tyr-127 is a binding site for substrate. The region spanning 128-252 (PVICPCIIVA…TIALKLIEHT (125 aa)) is the Nudix hydrolase domain. Residues Ala-161, Glu-177, and Glu-181 each contribute to the a divalent metal cation site. Positions 162-183 (GFVEVGETFEQAVHREVLEETG) match the Nudix box motif. 195 to 202 (QPWAFPNS) is a binding site for substrate. Glu-222 contacts a divalent metal cation. Ala-245 contributes to the substrate binding site.

The protein belongs to the Nudix hydrolase family. NudC subfamily. Homodimer. The cofactor is Mg(2+). Requires Mn(2+) as cofactor. Zn(2+) serves as cofactor.

The enzyme catalyses a 5'-end NAD(+)-phospho-ribonucleoside in mRNA + H2O = a 5'-end phospho-adenosine-phospho-ribonucleoside in mRNA + beta-nicotinamide D-ribonucleotide + 2 H(+). It carries out the reaction NAD(+) + H2O = beta-nicotinamide D-ribonucleotide + AMP + 2 H(+). It catalyses the reaction NADH + H2O = reduced beta-nicotinamide D-ribonucleotide + AMP + 2 H(+). MRNA decapping enzyme that specifically removes the nicotinamide adenine dinucleotide (NAD) cap from a subset of mRNAs by hydrolyzing the diphosphate linkage to produce nicotinamide mononucleotide (NMN) and 5' monophosphate mRNA. The NAD-cap is present at the 5'-end of some mRNAs and stabilizes RNA against 5'-processing. Has preference for mRNAs with a 5'-end purine. Catalyzes the hydrolysis of a broad range of dinucleotide pyrophosphates. This chain is NAD-capped RNA hydrolase NudC, found in Pasteurella multocida (strain Pm70).